Reading from the N-terminus, the 456-residue chain is Argininosuccinate lyase (456 aa).

This sequence belongs to the lyase 1 family. Argininosuccinate lyase subfamily.

The protein localises to the cytoplasm. It catalyses the reaction 2-(N(omega)-L-arginino)succinate = fumarate + L-arginine. It participates in amino-acid biosynthesis; L-arginine biosynthesis; L-arginine from L-ornithine and carbamoyl phosphate: step 3/3. The sequence is that of Argininosuccinate lyase from Shewanella woodyi (strain ATCC 51908 / MS32).